Reading from the N-terminus, the 103-residue chain is Cell division protein FtsB (103 aa).

Topologically, residues 1-3 are cytoplasmic; sequence MGK. A helical transmembrane segment spans residues 4–21; it reads LTLLLLAILVWLQYSLWF. The Periplasmic portion of the chain corresponds to 22–103; sequence GKNGIHDYSR…RAQTAGQNNR (82 aa). Positions 31 to 71 form a coiled coil; it reads RVNDDVAAQQATNAKLKARNDQLFAEIDDLNGGQEALEERA.

Belongs to the FtsB family. As to quaternary structure, part of a complex composed of FtsB, FtsL and FtsQ.

The protein resides in the cell inner membrane. In terms of biological role, essential cell division protein. May link together the upstream cell division proteins, which are predominantly cytoplasmic, with the downstream cell division proteins, which are predominantly periplasmic. This Escherichia fergusonii (strain ATCC 35469 / DSM 13698 / CCUG 18766 / IAM 14443 / JCM 21226 / LMG 7866 / NBRC 102419 / NCTC 12128 / CDC 0568-73) protein is Cell division protein FtsB.